A 619-amino-acid polypeptide reads, in one-letter code: Dihydroxy-acid dehydratase 1 (619 aa).

D81 lines the Mg(2+) pocket. C122 lines the [2Fe-2S] cluster pocket. Residues D123 and K124 each coordinate Mg(2+). K124 is subject to N6-carboxylysine. C198 contributes to the [2Fe-2S] cluster binding site. E494 is a binding site for Mg(2+). S520 acts as the Proton acceptor in catalysis.

The protein belongs to the IlvD/Edd family. As to quaternary structure, homodimer. It depends on [2Fe-2S] cluster as a cofactor. Mg(2+) is required as a cofactor.

It catalyses the reaction (2R)-2,3-dihydroxy-3-methylbutanoate = 3-methyl-2-oxobutanoate + H2O. The catalysed reaction is (2R,3R)-2,3-dihydroxy-3-methylpentanoate = (S)-3-methyl-2-oxopentanoate + H2O. It participates in amino-acid biosynthesis; L-isoleucine biosynthesis; L-isoleucine from 2-oxobutanoate: step 3/4. Its pathway is amino-acid biosynthesis; L-valine biosynthesis; L-valine from pyruvate: step 3/4. Functions in the biosynthesis of branched-chain amino acids. Catalyzes the dehydration of (2R,3R)-2,3-dihydroxy-3-methylpentanoate (2,3-dihydroxy-3-methylvalerate) into 2-oxo-3-methylpentanoate (2-oxo-3-methylvalerate) and of (2R)-2,3-dihydroxy-3-methylbutanoate (2,3-dihydroxyisovalerate) into 2-oxo-3-methylbutanoate (2-oxoisovalerate), the penultimate precursor to L-isoleucine and L-valine, respectively. This is Dihydroxy-acid dehydratase 1 from Bordetella pertussis (strain Tohama I / ATCC BAA-589 / NCTC 13251).